The following is a 274-amino-acid chain: 3-methyl-2-oxobutanoate hydroxymethyltransferase (274 aa).

2 residues coordinate Mg(2+): aspartate 50 and aspartate 89. 3-methyl-2-oxobutanoate-binding positions include 50 to 51 (DS), aspartate 89, and lysine 119. Residue glutamate 121 participates in Mg(2+) binding. Catalysis depends on glutamate 188, which acts as the Proton acceptor.

The protein belongs to the PanB family. As to quaternary structure, homodecamer; pentamer of dimers. The cofactor is Mg(2+).

Its subcellular location is the cytoplasm. It catalyses the reaction 3-methyl-2-oxobutanoate + (6R)-5,10-methylene-5,6,7,8-tetrahydrofolate + H2O = 2-dehydropantoate + (6S)-5,6,7,8-tetrahydrofolate. It participates in cofactor biosynthesis; (R)-pantothenate biosynthesis; (R)-pantoate from 3-methyl-2-oxobutanoate: step 1/2. Functionally, catalyzes the reversible reaction in which hydroxymethyl group from 5,10-methylenetetrahydrofolate is transferred onto alpha-ketoisovalerate to form ketopantoate. The polypeptide is 3-methyl-2-oxobutanoate hydroxymethyltransferase (Methylorubrum populi (strain ATCC BAA-705 / NCIMB 13946 / BJ001) (Methylobacterium populi)).